Consider the following 565-residue polypeptide: MKFSKFYAISTKENPKDATLPSHIFLVKGAFIEQIGSGLYNFLPLGKRVLDKIKNIIKEEMDKAGALEVNLSFNTPAELWKESGRFNVFGKELLRFKDRKENDFVLGPTHEEAMVALIRNKITSYKQLPLHLYQIGLKFRDEARPRFGLLRCREFLMKDGYSFHASEADLDKEFNLMHETYSKILTRLGLDFRAVEADSGAIGGSGSKEFMVLAKNGEDDILLCEHCDYAANIEAAKRTKKTCTDERPEADFATQFHTPNVKTIEELAEFFKINPYYTIKAIAKKAIYESEEKIIVFFIRGDDELQEVKALNAANALELVDVSEEELEKAGLVPGFIGFVGLNGVDFYIDHELENETNMIIGANKKDYHLVGINVVNLNKERFKDLAAVKEHDLCPKCQHKLKQSKGIEVGHIFKLGKKYSQAMNASYLDENGKAQFFTMGCYGMGVSRLVAVAIEASHDEKGCIWNKTLAPFVLDIIVSNIKDIKAMEFAEQIYTHFKDKEILFDDRNERFGVKINDFELMGFPYALVIGKSLENDEVELIHRNTLEKQVLKTQEVISHLEKIL.

This sequence belongs to the class-II aminoacyl-tRNA synthetase family. ProS type 1 subfamily. Homodimer.

It is found in the cytoplasm. It carries out the reaction tRNA(Pro) + L-proline + ATP = L-prolyl-tRNA(Pro) + AMP + diphosphate. In terms of biological role, catalyzes the attachment of proline to tRNA(Pro) in a two-step reaction: proline is first activated by ATP to form Pro-AMP and then transferred to the acceptor end of tRNA(Pro). As ProRS can inadvertently accommodate and process non-cognate amino acids such as alanine and cysteine, to avoid such errors it has two additional distinct editing activities against alanine. One activity is designated as 'pretransfer' editing and involves the tRNA(Pro)-independent hydrolysis of activated Ala-AMP. The other activity is designated 'posttransfer' editing and involves deacylation of mischarged Ala-tRNA(Pro). The misacylated Cys-tRNA(Pro) is not edited by ProRS. This Campylobacter lari (strain RM2100 / D67 / ATCC BAA-1060) protein is Proline--tRNA ligase.